A 446-amino-acid polypeptide reads, in one-letter code: tRNA-2-methylthio-N(6)-dimethylallyladenosine synthase (446 aa).

One can recognise an MTTase N-terminal domain in the interval 2–122 (KKAYVKSYGC…LPDLLRQSRE (121 aa)). The [4Fe-4S] cluster site is built by Cys-11, Cys-47, Cys-85, Cys-157, Cys-161, and Cys-164. The region spanning 143-375 (RNRGVTGFLT…QDLLDRQRHA (233 aa)) is the Radical SAM core domain. In terms of domain architecture, TRAM spans 378 to 440 (AASVGTLTEI…SNSLFGETLE (63 aa)).

The protein belongs to the methylthiotransferase family. MiaB subfamily. Monomer. The cofactor is [4Fe-4S] cluster.

It localises to the cytoplasm. It carries out the reaction N(6)-dimethylallyladenosine(37) in tRNA + (sulfur carrier)-SH + AH2 + 2 S-adenosyl-L-methionine = 2-methylsulfanyl-N(6)-dimethylallyladenosine(37) in tRNA + (sulfur carrier)-H + 5'-deoxyadenosine + L-methionine + A + S-adenosyl-L-homocysteine + 2 H(+). In terms of biological role, catalyzes the methylthiolation of N6-(dimethylallyl)adenosine (i(6)A), leading to the formation of 2-methylthio-N6-(dimethylallyl)adenosine (ms(2)i(6)A) at position 37 in tRNAs that read codons beginning with uridine. The sequence is that of tRNA-2-methylthio-N(6)-dimethylallyladenosine synthase from Methylorubrum extorquens (strain PA1) (Methylobacterium extorquens).